Here is a 233-residue protein sequence, read N- to C-terminus: Large ribosomal subunit protein uL1 (233 aa).

This sequence belongs to the universal ribosomal protein uL1 family. As to quaternary structure, part of the 50S ribosomal subunit.

Functionally, binds directly to 23S rRNA. The L1 stalk is quite mobile in the ribosome, and is involved in E site tRNA release. In terms of biological role, protein L1 is also a translational repressor protein, it controls the translation of the L11 operon by binding to its mRNA. The polypeptide is Large ribosomal subunit protein uL1 (Shewanella loihica (strain ATCC BAA-1088 / PV-4)).